Consider the following 211-residue polypeptide: Lysozyme g (211 aa).

The N-terminal stretch at 1–26 (MLGKNDPMCLVLVLLGLTALLGICQG) is a signal peptide. 2 cysteine pairs are disulfide-bonded: cysteine 30–cysteine 86 and cysteine 44–cysteine 55. Catalysis depends on residues glutamate 99 and aspartate 112.

Belongs to the glycosyl hydrolase 23 family. In terms of tissue distribution, granulocyte compartment of myelomonocytic cells.

Its subcellular location is the secreted. It carries out the reaction Hydrolysis of (1-&gt;4)-beta-linkages between N-acetylmuramic acid and N-acetyl-D-glucosamine residues in a peptidoglycan and between N-acetyl-D-glucosamine residues in chitodextrins.. This is Lysozyme g from Gallus gallus (Chicken).